The primary structure comprises 148 residues: Endoribonuclease YbeY (148 aa).

His105, His109, and Asp115 together coordinate Zn(2+).

This sequence belongs to the endoribonuclease YbeY family. The cofactor is Zn(2+).

Its subcellular location is the cytoplasm. Functionally, single strand-specific metallo-endoribonuclease involved in late-stage 70S ribosome quality control and in maturation of the 3' terminus of the 16S rRNA. The protein is Endoribonuclease YbeY of Chlorobium phaeovibrioides (strain DSM 265 / 1930) (Prosthecochloris vibrioformis (strain DSM 265)).